We begin with the raw amino-acid sequence, 203 residues long: Snake venom metalloproteinase fibrolase (203 aa).

At Gln1 the chain carries Pyrrolidone carboxylic acid. Residues 7-203 form the Peptidase M12B domain; sequence RYVQLVIVAD…NNPQCILNKP (197 aa). 3 disulfide bridges follow: Cys118-Cys198, Cys158-Cys182, and Cys160-Cys165. His143 provides a ligand contact to Zn(2+). Glu144 is an active-site residue. Zn(2+) is bound by residues His147 and His153.

The protein belongs to the venom metalloproteinase (M12B) family. P-I subfamily. Monomer. Zn(2+) is required as a cofactor. Expressed by the venom gland.

The protein localises to the secreted. It catalyses the reaction Hydrolysis of 14-Ala-|-Leu-15 in insulin B chain and 413-Lys-|-Leu-414 in alpha-chain of fibrinogen.. Is inhibited by EDTA, o-phenanthroline and tetraethylenepentamine. Its function is as follows. Snake venom zinc metalloprotease that exhibits direct fibrinolytic activity. This is Snake venom metalloproteinase fibrolase from Agkistrodon contortrix contortrix (Southern copperhead).